The sequence spans 167 residues: Phosphopantetheine adenylyltransferase (167 aa).

Threonine 10 is a binding site for substrate. Residues 10 to 11 (TF) and histidine 18 each bind ATP. Positions 77 and 91 each coordinate substrate. ATP is bound by residues 92–94 (GLR), glutamate 102, and 127–133 (YSFISSS).

It belongs to the bacterial CoaD family. Homohexamer. Mg(2+) serves as cofactor.

The protein localises to the cytoplasm. The catalysed reaction is (R)-4'-phosphopantetheine + ATP + H(+) = 3'-dephospho-CoA + diphosphate. The protein operates within cofactor biosynthesis; coenzyme A biosynthesis; CoA from (R)-pantothenate: step 4/5. In terms of biological role, reversibly transfers an adenylyl group from ATP to 4'-phosphopantetheine, yielding dephospho-CoA (dPCoA) and pyrophosphate. In Thermomicrobium roseum (strain ATCC 27502 / DSM 5159 / P-2), this protein is Phosphopantetheine adenylyltransferase.